Consider the following 346-residue polypeptide: Selenoprotein V (346 aa).

Disordered regions lie at residues methionine 1–arginine 40 and leucine 151–threonine 206. Pro residues predominate over residues leucine 151–proline 162. Residues cysteine 270–selenocysteine 273 constitute a cross-link (cysteinyl-selenocysteine (Cys-Sec); redox-active). A non-standard amino acid (selenocysteine) is located at residue selenocysteine 273.

This sequence belongs to the SelWTH family. In terms of processing, truncated SELENOV proteins produced by failed UGA/Sec decoding are ubiquitinated by the CRL2(APPBP2) complex, which recognizes the glycine (Gly) at the C-terminus of truncated SELENOV proteins. Testis specific.

In terms of biological role, may be involved in a redox-related process. The protein is Selenoprotein V of Homo sapiens (Human).